The following is a 166-amino-acid chain: Small ribosomal subunit protein uS5 (166 aa).

Residues 11–74 (LQEKLIAVNR…EKARRNMINV (64 aa)) enclose the S5 DRBM domain.

Belongs to the universal ribosomal protein uS5 family. Part of the 30S ribosomal subunit. Contacts proteins S4 and S8.

Its function is as follows. With S4 and S12 plays an important role in translational accuracy. In terms of biological role, located at the back of the 30S subunit body where it stabilizes the conformation of the head with respect to the body. The polypeptide is Small ribosomal subunit protein uS5 (Enterobacter sp. (strain 638)).